A 248-amino-acid polypeptide reads, in one-letter code: Octanoyltransferase (248 aa).

Positions 53–234 (ADTVDEIWIV…RLIANLDGES (182 aa)) constitute a BPL/LPL catalytic domain. Substrate contacts are provided by residues 93–100 (RGGQITYH), 165–167 (ALG), and 178–180 (GLS). Cys-196 serves as the catalytic Acyl-thioester intermediate.

Belongs to the LipB family.

The protein resides in the cytoplasm. It carries out the reaction octanoyl-[ACP] + L-lysyl-[protein] = N(6)-octanoyl-L-lysyl-[protein] + holo-[ACP] + H(+). It functions in the pathway protein modification; protein lipoylation via endogenous pathway; protein N(6)-(lipoyl)lysine from octanoyl-[acyl-carrier-protein]: step 1/2. In terms of biological role, catalyzes the transfer of endogenously produced octanoic acid from octanoyl-acyl-carrier-protein onto the lipoyl domains of lipoate-dependent enzymes. Lipoyl-ACP can also act as a substrate although octanoyl-ACP is likely to be the physiological substrate. The sequence is that of Octanoyltransferase from Burkholderia multivorans (strain ATCC 17616 / 249).